The sequence spans 332 residues: Opticin (332 aa).

The N-terminal stretch at methionine 1–threonine 19 is a signal peptide. The disordered stretch occupies residues serine 21 to phenylalanine 41. Basic and acidic residues predominate over residues arginine 29 to aspartate 39. Sulfotyrosine is present on residues tyrosine 65 and tyrosine 71. The segment at alanine 86–threonine 106 is disordered. Positions leucine 116–arginine 153 constitute an LRRNT domain. Tyrosine 139 carries the sulfotyrosine modification. LRR repeat units lie at residues arginine 154–glycine 175, lysine 178–leucine 199, alanine 202–isoleucine 223, lysine 248–serine 269, leucine 270–aspartate 290, and glutamine 300–tyrosine 320. A disulfide bond links cysteine 289 and cysteine 322. Asparagine 312 is a glycosylation site (N-linked (GlcNAc...) asparagine).

The protein belongs to the small leucine-rich proteoglycan (SLRP) family. SLRP class III subfamily. In terms of assembly, homodimer. In terms of processing, O-glycosylated. Post-translationally, proteolytically cleaved by MMP1, MMP2, MMP3, MMP7, MMP8, MMP9, ADAMTS4, and ADAMTS5. Proteolytically cleaved by MMP13. The degradation of OPTC by proteases may contribute to osteoarthritis pathophysiology. Sulfated on tyrosine residues. In terms of tissue distribution, expressed in cartilage and synovial membranes (at protein level). Expressed in the retina, iris, ligament, skin and fetal liver (at protein level). Expressed in the retinal pigment epithelium (at protein level). Expressed in synovial fibroblasts and subchondral bone osteoblasts.

The protein resides in the secreted. It is found in the extracellular space. The protein localises to the extracellular matrix. Its function is as follows. Inhibits angiogenesis in the vitreous humor of the eye, and therefore represses neovascularization. Binds collagen fibrils. May be involved in collagen fiber organization via regulation of other members of the small leucine-rich repeat proteoglycan superfamily. The protein is Opticin (OPTC) of Homo sapiens (Human).